The chain runs to 101 residues: MNKSKRLFTKSKRSFRRRLPPIQSGDRIDYRNMSLISRFISEQGKILSRRVNRVTLKQQRLITIAIKQARILSLLPFLNNQKQFERSESTPRTTSLRTRKK.

It belongs to the bacterial ribosomal protein bS18 family. As to quaternary structure, part of the 30S ribosomal subunit.

The protein resides in the plastid. It is found in the chloroplast. The polypeptide is Small ribosomal subunit protein bS18c (rps18) (Arabidopsis thaliana (Mouse-ear cress)).